We begin with the raw amino-acid sequence, 407 residues long: Tryptophan synthase beta chain (407 aa).

Lys91 is subject to N6-(pyridoxal phosphate)lysine.

Belongs to the TrpB family. As to quaternary structure, tetramer of two alpha and two beta chains. Pyridoxal 5'-phosphate is required as a cofactor.

The catalysed reaction is (1S,2R)-1-C-(indol-3-yl)glycerol 3-phosphate + L-serine = D-glyceraldehyde 3-phosphate + L-tryptophan + H2O. It functions in the pathway amino-acid biosynthesis; L-tryptophan biosynthesis; L-tryptophan from chorismate: step 5/5. The beta subunit is responsible for the synthesis of L-tryptophan from indole and L-serine. This is Tryptophan synthase beta chain from Streptococcus pneumoniae (strain Taiwan19F-14).